The following is a 445-amino-acid chain: Alpha-1,3-mannosyl-glycoprotein 2-beta-N-acetylglucosaminyltransferase (445 aa).

Residues 1 to 6 lie on the Cytoplasmic side of the membrane; it reads MLKKQS. The helical; Signal-anchor for type II membrane protein transmembrane segment at 7–29 threads the bilayer; sequence AGLVLWGAILFVAWNALLLLFFW. Residues 30–445 are Lumenal-facing; that stretch reads TRPAPGRPPS…TWEGYDPSWN (416 aa). An intrachain disulfide couples cysteine 113 to cysteine 143. Substrate contacts are provided by arginine 115, aspartate 142, histidine 188, and aspartate 210. Aspartate 211 is a Mn(2+) binding site. The cysteines at positions 237 and 303 are disulfide-linked. Aspartate 289 functions as the Proton acceptor in the catalytic mechanism. Serine 320 contributes to the substrate binding site.

It belongs to the glycosyltransferase 13 family. As to quaternary structure, interacts with MGAT4D. Interacts with BRI3 (isoforms 1 and 2); the interaction with isoform 2 is weaker than with isoform 1. It depends on Mn(2+) as a cofactor.

The protein resides in the golgi apparatus membrane. It is found in the cytoplasm. The protein localises to the perinuclear region. It catalyses the reaction N(4)-(alpha-D-Man-(1-&gt;3)-[alpha-D-Man-(1-&gt;3)-[alpha-D-Man-(1-&gt;6)]-alpha-D-Man-(1-&gt;6)]-beta-D-Man-(1-&gt;4)-beta-D-GlcNAc-(1-&gt;4)-beta-D-GlcNAc)-L-asparaginyl-[protein] (N-glucan mannose isomer 5A1,2) + UDP-N-acetyl-alpha-D-glucosamine = N(4)-{beta-D-GlcNAc-(1-&gt;2)-alpha-D-Man-(1-&gt;3)-[alpha-D-Man-(1-&gt;3)-[alpha-D-Man-(1-&gt;6)]-alpha-D-Man-(1-&gt;6)]-beta-D-Man-(1-&gt;4)-beta-D-GlcNAc-(1-&gt;4)-beta-D-GlcNAc}-L-asparaginyl-[protein] + UDP + H(+). Its pathway is protein modification; protein glycosylation. Its function is as follows. Initiates complex N-linked carbohydrate formation. Essential for the conversion of high-mannose to hybrid and complex N-glycans. This chain is Alpha-1,3-mannosyl-glycoprotein 2-beta-N-acetylglucosaminyltransferase (MGAT1), found in Homo sapiens (Human).